A 201-amino-acid polypeptide reads, in one-letter code: Recombination protein RecR (201 aa).

The C4-type zinc finger occupies 57–72; the sequence is CECCRTLTEEPLCRIC. Positions 81–176 constitute a Toprim domain; the sequence is GVLCIVETPA…NTTRIAHGVP (96 aa).

The protein belongs to the RecR family.

Functionally, may play a role in DNA repair. It seems to be involved in an RecBC-independent recombinational process of DNA repair. It may act with RecF and RecO. This chain is Recombination protein RecR, found in Idiomarina loihiensis (strain ATCC BAA-735 / DSM 15497 / L2-TR).